Here is a 325-residue protein sequence, read N- to C-terminus: Short chain isoprenyl diphosphate synthase (325 aa).

Isopentenyl diphosphate is bound by residues Lys44, Arg47, and His76. Positions 83 and 87 each coordinate Mg(2+). Residue Arg92 coordinates an all-trans-polyprenyl diphosphate. Arg93 contacts isopentenyl diphosphate. An all-trans-polyprenyl diphosphate is bound by residues Lys173, Thr174, Gln211, Lys228, and Lys238.

The protein belongs to the FPP/GGPP synthase family. Homodimer. Mg(2+) serves as cofactor.

It is found in the cytoplasm. The sequence is that of Short chain isoprenyl diphosphate synthase (idsA) from Methanothermobacter thermautotrophicus (strain ATCC 29096 / DSM 1053 / JCM 10044 / NBRC 100330 / Delta H) (Methanobacterium thermoautotrophicum).